We begin with the raw amino-acid sequence, 901 residues long: MutS protein homolog 5 (901 aa).

643-650 serves as a coordination point for ATP; the sequence is GANASGKS.

Belongs to the DNA mismatch repair MutS family. Heterooligomer of MSH4 and MSH5.

In terms of biological role, involved in meiotic recombination. Facilitate crossovers between homologs during meiosis. The polypeptide is MutS protein homolog 5 (MSH5) (Saccharomyces cerevisiae (strain ATCC 204508 / S288c) (Baker's yeast)).